Consider the following 443-residue polypeptide: Probable nitrate/nitrite antiporter NarK2 (443 aa).

A run of 12 helical transmembrane segments spans residues 32-52 (ITTF…ALVV), 66-86 (LFWL…IWTF), 95-115 (HLVT…GFAV), 123-143 (WVLL…SGYM), 172-192 (IVQF…LLGG), 210-230 (NATF…WVYL), 256-276 (SLYI…PLLI), 292-312 (YAFL…PISD), 314-334 (LGGA…ALLV), 346-366 (FPMF…GNAS), 383-403 (VIGW…TLAA), and 409-429 (TGGF…NFFL).

The protein belongs to the major facilitator superfamily. Nitrate/nitrite porter (TC 2.A.1.8) family.

The protein localises to the cell membrane. The enzyme catalyses nitrate(in) + nitrite(out) = nitrate(out) + nitrite(in). Probable nitrate/nitrite antiporter that may be involved in nitrate import and nitrite export during anaerobic growth. This Thermus thermophilus protein is Probable nitrate/nitrite antiporter NarK2.